The following is a 330-amino-acid chain: Aspartate--ammonia ligase (330 aa).

Belongs to the class-II aminoacyl-tRNA synthetase family. AsnA subfamily.

Its subcellular location is the cytoplasm. It catalyses the reaction L-aspartate + NH4(+) + ATP = L-asparagine + AMP + diphosphate + H(+). Its pathway is amino-acid biosynthesis; L-asparagine biosynthesis; L-asparagine from L-aspartate (ammonia route): step 1/1. In Escherichia coli O139:H28 (strain E24377A / ETEC), this protein is Aspartate--ammonia ligase.